The sequence spans 179 residues: Translation initiation factor IF-3 (179 aa).

The protein belongs to the IF-3 family. As to quaternary structure, monomer.

It localises to the cytoplasm. IF-3 binds to the 30S ribosomal subunit and shifts the equilibrium between 70S ribosomes and their 50S and 30S subunits in favor of the free subunits, thus enhancing the availability of 30S subunits on which protein synthesis initiation begins. This Lactococcus lactis subsp. lactis (strain IL1403) (Streptococcus lactis) protein is Translation initiation factor IF-3.